A 216-amino-acid chain; its full sequence is DNA-directed RNA polymerase subunit alpha (216 aa).

This sequence belongs to the RNA polymerase alpha chain family. As to quaternary structure, in plastids the minimal PEP RNA polymerase catalytic core is composed of four subunits: alpha, beta, beta', and beta''. When a (nuclear-encoded) sigma factor is associated with the core the holoenzyme is formed, which can initiate transcription.

The protein localises to the plastid. It localises to the chloroplast. The enzyme catalyses RNA(n) + a ribonucleoside 5'-triphosphate = RNA(n+1) + diphosphate. In terms of biological role, DNA-dependent RNA polymerase catalyzes the transcription of DNA into RNA using the four ribonucleoside triphosphates as substrates. This chain is DNA-directed RNA polymerase subunit alpha (rpoA), found in Euglena granulata.